We begin with the raw amino-acid sequence, 87 residues long: Omega-lycotoxin-Am1b (87 aa).

A signal peptide spans 1-17 (MKLSIFFVLFFIAIAYC). The propeptide occupies 18–40 (QPEFLDDEEDEVEETLPVAEEGR). 4 disulfide bridges follow: Cys-44/Cys-59, Cys-51/Cys-64, Cys-58/Cys-84, and Cys-66/Cys-82.

Belongs to the neurotoxin omega-lctx family. Expressed by the venom gland.

The protein resides in the secreted. Modulates Cav2.1/CACNA1A voltage-gated calcium channels (P/Q-type currents) in rat cerebellar Purkinje cells and hippocampal CA1-CA3 neurons. At saturating concentrations (&gt;10 nM) decelerates activation kinetics and slightly increases peak amplitude without affecting deactivation kinetics. In vivo, does not cause death when intravenously injected into mice. In rat models, through its activity on Cav2.1/CACNA1A, has an ameliorative effect on memory defects provoked by hyperstimulation of N-methyl-D-aspartate receptors (NMDARs) in the hippocampus. This is Omega-lycotoxin-Am1b from Alopecosa marikovskyi (Wolf spider).